The sequence spans 321 residues: Capsid protein (321 aa).

Residues 1–43 are disordered; that stretch reads MSGEQTEQISKDKAVAAEQARKEQIAEGKKAAESPEVERRKKN. Residues 9-39 show a composition bias toward basic and acidic residues; sequence ISKDKAVAAEQARKEQIAEGKKAAESPEVER.

This sequence belongs to the potexviruses coat protein family.

It localises to the virion. In terms of biological role, required for genome encapsidation. Forms ribonucleoprotein complexes along with TGB1 helicase and viral RNA. The polypeptide is Capsid protein (Poplar mosaic virus (isolate ATCC Pv275) (PMV)).